The chain runs to 478 residues: Ribulose bisphosphate carboxylase large chain (478 aa).

Residues 1 to 2 constitute a propeptide that is removed on maturation; the sequence is MS. At Pro3 the chain carries N-acetylproline. Residue Lys14 is modified to N6,N6,N6-trimethyllysine. Residues Asn123 and Thr173 each coordinate substrate. Lys175 serves as the catalytic Proton acceptor. Lys177 serves as a coordination point for substrate. Mg(2+)-binding residues include Lys201, Asp203, and Glu204. Residue Lys201 is modified to N6-carboxylysine. His294 acts as the Proton acceptor in catalysis. 3 residues coordinate substrate: Arg295, His327, and Ser379.

Belongs to the RuBisCO large chain family. Type I subfamily. As to quaternary structure, heterohexadecamer of 8 large chains and 8 small chains; disulfide-linked. The disulfide link is formed within the large subunit homodimers. Mg(2+) serves as cofactor. The disulfide bond which can form in the large chain dimeric partners within the hexadecamer appears to be associated with oxidative stress and protein turnover.

The protein localises to the plastid. It is found in the chloroplast. It catalyses the reaction 2 (2R)-3-phosphoglycerate + 2 H(+) = D-ribulose 1,5-bisphosphate + CO2 + H2O. The catalysed reaction is D-ribulose 1,5-bisphosphate + O2 = 2-phosphoglycolate + (2R)-3-phosphoglycerate + 2 H(+). Functionally, ruBisCO catalyzes two reactions: the carboxylation of D-ribulose 1,5-bisphosphate, the primary event in carbon dioxide fixation, as well as the oxidative fragmentation of the pentose substrate in the photorespiration process. Both reactions occur simultaneously and in competition at the same active site. This is Ribulose bisphosphate carboxylase large chain from Drimys granadensis.